A 354-amino-acid polypeptide reads, in one-letter code: DNA polymerase IV (354 aa).

The region spanning 8 to 189 (IIHVDMDCFY…LPLEKIPGVG (182 aa)) is the UmuC domain. Residues D12 and D107 each contribute to the Mg(2+) site. E108 is a catalytic residue.

This sequence belongs to the DNA polymerase type-Y family. Monomer. Mg(2+) serves as cofactor.

The protein resides in the cytoplasm. The catalysed reaction is DNA(n) + a 2'-deoxyribonucleoside 5'-triphosphate = DNA(n+1) + diphosphate. Functionally, poorly processive, error-prone DNA polymerase involved in untargeted mutagenesis. Copies undamaged DNA at stalled replication forks, which arise in vivo from mismatched or misaligned primer ends. These misaligned primers can be extended by PolIV. Exhibits no 3'-5' exonuclease (proofreading) activity. May be involved in translesional synthesis, in conjunction with the beta clamp from PolIII. The sequence is that of DNA polymerase IV from Vibrio parahaemolyticus serotype O3:K6 (strain RIMD 2210633).